We begin with the raw amino-acid sequence, 648 residues long: Activatory protein CHA4 (648 aa).

Pro residues predominate over residues 1-10 (MMLEPSPPPL). The disordered stretch occupies residues 1–37 (MMLEPSPPPLTTTVTPSLPSSLKKSVTDNDQNNNNVP). Low complexity predominate over residues 11–22 (TTTVTPSLPSSL). Positions 44–70 (CQNCRRRRRKCNMEKPCSNCIKFRTEC) form a DNA-binding region, zn(2)-C6 fungal-type. Residues 140-177 (AQSALPSSESNDENESDAFTKKMPSESPPPVGTNSIYP) form a disordered region. Residues S164 and S166 each carry the phosphoserine modification.

The protein localises to the nucleus. Functionally, activates the CHA1 gene for L-serine dehydratase. Binds to the DNA sequence 5'-GVGGARAYRTRATTCCRC-3'. The sequence is that of Activatory protein CHA4 (CHA4) from Saccharomyces cerevisiae (strain ATCC 204508 / S288c) (Baker's yeast).